The primary structure comprises 130 residues: Large ribosomal subunit protein bL19 (130 aa).

Belongs to the bacterial ribosomal protein bL19 family.

Its function is as follows. This protein is located at the 30S-50S ribosomal subunit interface and may play a role in the structure and function of the aminoacyl-tRNA binding site. In Cupriavidus taiwanensis (strain DSM 17343 / BCRC 17206 / CCUG 44338 / CIP 107171 / LMG 19424 / R1) (Ralstonia taiwanensis (strain LMG 19424)), this protein is Large ribosomal subunit protein bL19.